The primary structure comprises 156 residues: Small ribosomal subunit protein uS7 (156 aa).

The protein belongs to the universal ribosomal protein uS7 family. In terms of assembly, part of the 30S ribosomal subunit. Contacts proteins S9 and S11.

In terms of biological role, one of the primary rRNA binding proteins, it binds directly to 16S rRNA where it nucleates assembly of the head domain of the 30S subunit. Is located at the subunit interface close to the decoding center, probably blocks exit of the E-site tRNA. The protein is Small ribosomal subunit protein uS7 of Vibrio campbellii (strain ATCC BAA-1116).